A 301-amino-acid chain; its full sequence is Thyroxine 5-deiodinase (301 aa).

Over 1-41 the chain is Cytoplasmic; the sequence is MSRQAAPRWVVGEGRGTLGGAATMLRSLLLHSLRLCSQTAS. Residues 42–64 traverse the membrane as a helical; Signal-anchor for type II membrane protein segment; the sequence is CLVLFPRFLGTAFMLWLLDFLCI. Topologically, residues 65 to 301 are extracellular; the sequence is RKHLLGRRRR…QLHGPQPRRV (237 aa). The active site involves Sec-167. Sec-167 is a non-standard amino acid (selenocysteine).

This sequence belongs to the iodothyronine deiodinase family. As to quaternary structure, monomer. Homodimer. May undergo minor heretodimerization with DIO1 and DIO2. In terms of tissue distribution, highly expressed in mammary gland. Detected at lower levels in kidney, and at very low levels in the other tissues.

It localises to the cell membrane. The protein resides in the endosome membrane. It catalyses the reaction 3,3',5'-triiodo-L-thyronine + iodide + A + H(+) = L-thyroxine + AH2. The enzyme catalyses 3,3'-diiodo-L-thyronine + iodide + A + H(+) = 3,3',5-triiodo-L-thyronine + AH2. The catalysed reaction is 3-iodo-L-thyronine + iodide + A + H(+) = 3,5-diiodo-L-thyronine + AH2. It carries out the reaction L-thyronine + iodide + A + H(+) = 3-iodo-L-thyronine + AH2. It catalyses the reaction 3',5'-diiodo-L-thyronine + iodide + A + H(+) = 3,3',5'-triiodo-L-thyronine + AH2. The enzyme catalyses 3'-iodo-L-thyronine + iodide + A + H(+) = 3,3'-diiodo-L-thyronine + AH2. The catalysed reaction is 3,3',5'-triiodothyronamine + iodide + A + H(+) = 3,3',5,5'-tetraiodothyronamine + AH2. It carries out the reaction 3',5'-diiodothyronamine + iodide + A + H(+) = 3,3',5'-triiodothyronamine + AH2. It catalyses the reaction 3,3'-diiodothyronamine + iodide + A + H(+) = 3,3',5-triiodothyronamine + AH2. The enzyme catalyses 3-iodothyronamine + iodide + A + H(+) = 3,5-diiodothyronamine + AH2. The catalysed reaction is 3'-iodothyronamine + iodide + A + H(+) = 3,3'-diiodothyronamine + AH2. It carries out the reaction thyronamine + iodide + A + H(+) = 3-iodothyronamine + AH2. Plays a crucial role in the metabolism of thyroid hormones (TH) and has specific roles in TH activation and inactivation by deiodination. Catalyzes the deiodination of L-thyroxine (T4) to 3,3',5'-triiodothyronine (rT3), 3,5,3'-triiodothyronine (T3) to 3,3'-diiodothyronine (3,3'-T2), 3,5-diiodothyronine (3,5-T2) to 3-monoiodothyronine (3-T1), rT3 to 3',5'-diiodothyronine (3',5'-T2) and 3,3'-T2 to 3'-monoiodothyronine (3'-T1) via inner-ring deiodination (IRD). Catalyzes the deiodination of 3-T1 to L-thyronine (T0) via outer-ring deiodination (ORD). Catalyzes the tyrosyl ring deiodinations of 3,3',5,5'-tetraiodothyronamine, 3,3',5'-triiodothyronamine, 3,5,3'-triiodothyronamine, 3,5-diiodothyronamine, 3,3'-diiodothyronamine and 3-iodothyronamine. The chain is Thyroxine 5-deiodinase (DIO3) from Bos taurus (Bovine).